The following is a 380-amino-acid chain: Tryptophan--tRNA ligase 2 (380 aa).

Residues 74–82 carry the 'HIGH' region motif; sequence PSGPMHLGH. The 'KMSKS' region signature appears at 249–253; the sequence is KMSSS.

Belongs to the class-I aminoacyl-tRNA synthetase family.

It is found in the cytoplasm. The enzyme catalyses tRNA(Trp) + L-tryptophan + ATP = L-tryptophyl-tRNA(Trp) + AMP + diphosphate + H(+). The sequence is that of Tryptophan--tRNA ligase 2 from Halobacterium salinarum (strain ATCC 700922 / JCM 11081 / NRC-1) (Halobacterium halobium).